Here is a 129-residue protein sequence, read N- to C-terminus: NADH dehydrogenase [ubiquinone] 1 beta subcomplex subunit 4 (129 aa).

The residue at position 2 (Ser-2) is an N-acetylserine. Ser-26 is subject to Phosphoserine. The helical transmembrane segment at 88–105 (LMGALCGFGPLIFIYYII) threads the bilayer.

It belongs to the complex I NDUFB4 subunit family. In terms of assembly, complex I is composed of 45 different subunits.

It localises to the mitochondrion inner membrane. Its function is as follows. Accessory subunit of the mitochondrial membrane respiratory chain NADH dehydrogenase (Complex I), that is believed not to be involved in catalysis. Complex I functions in the transfer of electrons from NADH to the respiratory chain. The immediate electron acceptor for the enzyme is believed to be ubiquinone. This chain is NADH dehydrogenase [ubiquinone] 1 beta subcomplex subunit 4 (NDUFB4), found in Gorilla gorilla gorilla (Western lowland gorilla).